A 607-amino-acid polypeptide reads, in one-letter code: Chaperone protein dnaK (607 aa).

Over residues 579-591 (KASETSNAKTNGK) the composition is skewed to polar residues. Residues 579 to 607 (KASETSNAKTNGKASEKEDVIDADFKAQE) are disordered. The span at 592 to 607 (ASEKEDVIDADFKAQE) shows a compositional bias: basic and acidic residues.

This sequence belongs to the heat shock protein 70 family.

The protein localises to the plastid. Its subcellular location is the chloroplast. Functionally, acts as a chaperone. This Cyanidioschyzon merolae (strain NIES-3377 / 10D) (Unicellular red alga) protein is Chaperone protein dnaK.